The primary structure comprises 146 residues: Hemoglobin subunit beta (146 aa).

Val1 carries the N-acetylvaline modification. The 145-residue stretch at 2–146 (HLTADEKAAV…VATALAHKYH (145 aa)) folds into the Globin domain. Thr12 is subject to Phosphothreonine. Ser44 is modified (phosphoserine). Residue Lys59 is modified to N6-acetyllysine. Heme b is bound at residue His63. Position 82 is an N6-acetyllysine (Lys82). A heme b-binding site is contributed by His92. Cys93 is subject to S-nitrosocysteine. N6-acetyllysine is present on Lys144.

The protein belongs to the globin family. As to quaternary structure, heterotetramer of two alpha chains and two beta chains. In terms of tissue distribution, red blood cells.

Functionally, involved in oxygen transport from the lung to the various peripheral tissues. The sequence is that of Hemoglobin subunit beta (HBB) from Taphozous georgianus (Sharp-nosed tomb bat).